The primary structure comprises 198 residues: Small ribosomal subunit protein uS4 (198 aa).

The interval 26–45 is disordered; the sequence is LKKRPYAPGQHGQRRSKLSN. In terms of domain architecture, S4 RNA-binding spans 91 to 154; it reads SRLDNVVYRL…KNLTIVKEAL (64 aa).

This sequence belongs to the universal ribosomal protein uS4 family. In terms of assembly, part of the 30S ribosomal subunit. Contacts protein S5. The interaction surface between S4 and S5 is involved in control of translational fidelity.

One of the primary rRNA binding proteins, it binds directly to 16S rRNA where it nucleates assembly of the body of the 30S subunit. In terms of biological role, with S5 and S12 plays an important role in translational accuracy. The polypeptide is Small ribosomal subunit protein uS4 (Acholeplasma laidlawii (strain PG-8A)).